Reading from the N-terminus, the 752-residue chain is Sialidase 85-1.1 (752 aa).

The first 23 residues, M1–A23, serve as a signal peptide directing secretion. BNR repeat units follow at residues I274–L285 and Y319–E330. Residues A693–A725 are disordered. The segment covering A701–A711 has biased composition (low complexity).

This sequence belongs to the glycosyl hydrolase 33 family.

It carries out the reaction Hydrolysis of alpha-(2-&gt;3)-, alpha-(2-&gt;6)-, alpha-(2-&gt;8)- glycosidic linkages of terminal sialic acid residues in oligosaccharides, glycoproteins, glycolipids, colominic acid and synthetic substrates.. In terms of biological role, developmentally regulated neuraminidase implicated in parasite invasion of cells. May contribute to the pathology during T.cruzi infection by cleaving sialic acid from cells of the immune system. The polypeptide is Sialidase 85-1.1 (SA85-1.1) (Trypanosoma cruzi).